A 73-amino-acid chain; its full sequence is uncharacterized protein (73 aa).

The signal sequence occupies residues 1 to 21; that stretch reads MTLFSSLSSLSTGSLKSSVSS. Low complexity predominate over residues 1–38; it reads MTLFSSLSSLSTGSLKSSVSSIETGSSSGSFGSNETSG. The interval 1–43 is disordered; it reads MTLFSSLSSLSTGSLKSSVSSIETGSSSGSFGSNETSGWGSHH. A glycan (N-linked (GlcNAc...) asparagine) is linked at asparagine 34.

The protein resides in the secreted. This is an uncharacterized protein from Dictyostelium discoideum (Social amoeba).